Consider the following 449-residue polypeptide: Aspartyl protease AED3 (449 aa).

The N-terminal stretch at 1–23 is a signal peptide; that stretch reads MASSSLHFFFFLTLLLPFTFTTA. The region spanning 104–444 is the Peptidase A1 domain; that stretch reads YVVRAKLGTP…DVPNSRIGIA (341 aa). Asp-122 is an active-site residue. A disulfide bridge links Cys-132 with Cys-138. Residues Asn-140, Asn-148, Asn-184, Asn-211, and Asn-297 are each glycosylated (N-linked (GlcNAc...) asparagine). Asp-328 is a catalytic residue. Asn-353 carries an N-linked (GlcNAc...) asparagine glycan. Cys-366 and Cys-405 are joined by a disulfide.

This sequence belongs to the peptidase A1 family.

The protein localises to the secreted. The protein resides in the extracellular space. It localises to the apoplast. The polypeptide is Aspartyl protease AED3 (Arabidopsis thaliana (Mouse-ear cress)).